Reading from the N-terminus, the 270-residue chain is uncharacterized protein (270 aa).

Disordered stretches follow at residues 1-21 and 53-77; these read MSTNINEEKCLEGDDIKYEKP and PNILSSKHDGDKNKNDKKKEDAKLN. A compositionally biased stretch (basic and acidic residues) spans 58–75; it reads SKHDGDKNKNDKKKEDAK. Residues 182 to 270 are a coiled coil; sequence EENKSREEKH…KIEDNLNTYE (89 aa).

This is an uncharacterized protein from Plasmodium falciparum (isolate 3D7).